Reading from the N-terminus, the 247-residue chain is Carboxy-S-adenosyl-L-methionine synthase (247 aa).

S-adenosyl-L-methionine contacts are provided by residues Tyr-39, 64-66 (GCS), 89-90 (DN), 117-118 (DI), Asn-132, and Arg-199.

The protein belongs to the class I-like SAM-binding methyltransferase superfamily. Cx-SAM synthase family. In terms of assembly, homodimer.

It carries out the reaction prephenate + S-adenosyl-L-methionine = carboxy-S-adenosyl-L-methionine + 3-phenylpyruvate + H2O. Its function is as follows. Catalyzes the conversion of S-adenosyl-L-methionine (SAM) to carboxy-S-adenosyl-L-methionine (Cx-SAM). This Klebsiella pneumoniae (strain 342) protein is Carboxy-S-adenosyl-L-methionine synthase.